The sequence spans 392 residues: MDYYTILGVAKTATPEEIKKAYRKLAVKYHPDKNPGDAEAERRFKEVSEAYEVLGDAQKRESYDRYGKDGPFAGAGGFGGAGMGNMEDALRTFMGAFGGDFGGNGGGFFEGLFGGLGEAFGMRGGSESSRQGASKKVHITLSFEEAAKGVEKELLVSGYKSCDACSGSGANTAKGVKVCDRCKGSGQVVQSRGFFSMASTCPDCSGEGRVITDPCSVCRGQGRIKDKRSVHVNIPAGVDSGMRLKMEGYGDAGQNGAPAGDLYVFIDVEPHPVFERHGDDLVLELPIGFVDAALGIKKEIPTLLKEGTCRLSIPEGIQSGTVLKVRGQGFPNVHGKSRGDLLVRVSVETPQHLSNEQKDLLRQFAATEKAENFPKKRSFLDKIKGFFSDFAV.

The J domain maps to 2–67 (DYYTILGVAK…QKRESYDRYG (66 aa)). The segment at 149 to 227 (GVEKELLVSG…CRGQGRIKDK (79 aa)) adopts a CR-type zinc-finger fold. The Zn(2+) site is built by Cys162, Cys165, Cys179, Cys182, Cys201, Cys204, Cys215, and Cys218. 4 CXXCXGXG motif repeats span residues 162 to 169 (CDACSGSG), 179 to 186 (CDRCKGSG), 201 to 208 (CPDCSGEG), and 215 to 222 (CSVCRGQG).

Belongs to the DnaJ family. Homodimer. Zn(2+) serves as cofactor.

It localises to the cytoplasm. In terms of biological role, participates actively in the response to hyperosmotic and heat shock by preventing the aggregation of stress-denatured proteins and by disaggregating proteins, also in an autonomous, DnaK-independent fashion. Unfolded proteins bind initially to DnaJ; upon interaction with the DnaJ-bound protein, DnaK hydrolyzes its bound ATP, resulting in the formation of a stable complex. GrpE releases ADP from DnaK; ATP binding to DnaK triggers the release of the substrate protein, thus completing the reaction cycle. Several rounds of ATP-dependent interactions between DnaJ, DnaK and GrpE are required for fully efficient folding. Also involved, together with DnaK and GrpE, in the DNA replication of plasmids through activation of initiation proteins. The polypeptide is Chaperone protein DnaJ (Chlamydia trachomatis serovar L2 (strain ATCC VR-902B / DSM 19102 / 434/Bu)).